The following is a 549-amino-acid chain: Arginine--tRNA ligase (549 aa).

The 'HIGH' region signature appears at 113–123 (ANPDGPLHIGH).

The protein belongs to the class-I aminoacyl-tRNA synthetase family.

It is found in the cytoplasm. The enzyme catalyses tRNA(Arg) + L-arginine + ATP = L-arginyl-tRNA(Arg) + AMP + diphosphate. This is Arginine--tRNA ligase (argS) from Archaeoglobus fulgidus (strain ATCC 49558 / DSM 4304 / JCM 9628 / NBRC 100126 / VC-16).